Reading from the N-terminus, the 1035-residue chain is Putative protein FAM47C (1035 aa).

Disordered regions lie at residues 1–21 and 159–797; these read MGDQRPQDRPSSPGMDSTPWY and LEDA…RRVS. The segment covering 159–173 has biased composition (basic and acidic residues); it reads LEDAGSCEGQEKTTD. Pro residues predominate over residues 380 to 392; it reads PEPPKTRVPPLRP. Positions 478-490 are enriched in basic and acidic residues; sequence PPEKDVSHLRPEP. Residues 533-544 are compositionally biased toward polar residues; the sequence is SLHQAPPESSVS. Basic and acidic residues-rich tracts occupy residues 611-622, 683-694, and 753-766; these read PETRVSHLRPEP and EPLETRVSHLRPEP.

The protein belongs to the FAM47 family.

This Homo sapiens (Human) protein is Putative protein FAM47C (FAM47C).